The chain runs to 143 residues: Nucleoside diphosphate kinase (143 aa).

Lysine 11, phenylalanine 59, arginine 87, threonine 93, arginine 104, and asparagine 114 together coordinate ATP. Histidine 117 (pros-phosphohistidine intermediate) is an active-site residue.

The protein belongs to the NDK family. In terms of assembly, homotetramer. The cofactor is Mg(2+).

The protein localises to the cytoplasm. It carries out the reaction a 2'-deoxyribonucleoside 5'-diphosphate + ATP = a 2'-deoxyribonucleoside 5'-triphosphate + ADP. The catalysed reaction is a ribonucleoside 5'-diphosphate + ATP = a ribonucleoside 5'-triphosphate + ADP. In terms of biological role, major role in the synthesis of nucleoside triphosphates other than ATP. The ATP gamma phosphate is transferred to the NDP beta phosphate via a ping-pong mechanism, using a phosphorylated active-site intermediate. The polypeptide is Nucleoside diphosphate kinase (Acinetobacter baylyi (strain ATCC 33305 / BD413 / ADP1)).